Reading from the N-terminus, the 997-residue chain is Disease resistance protein RML1A (997 aa).

Positions 12 to 176 constitute a TIR domain; it reads WRYRVFTSFH…KIARDVSEKL (165 aa). The active site involves E87. The NB-ARC domain maps to 191–447; it reads EAHLRKIQSL…HIAIFFNYED (257 aa). 10 LRR repeats span residues 194–218, 534–557, 600–623, 624–647, 649–670, 671–693, 694–714, 715–737, 758–781, and 783–808; these read LRKIQSLLDLDNDEVKMVAISGPAG, TSGINEVSISNKALRRMCNLRFLS, AENLVELDMKDSRLEYLWPGTQLL, TKLKKLNLEGSYNLKELPDLSNAT, LEMLDLSVCLALAELPSSIKNL, HKLDVIYMDLCESLHMIPTNINL, ASLETMYMTGCPQLKTFPAFS, TKIKRLYLVRTGVEEVPASITHC, PSSLQTLDLSSTDIEMIADSCIKD, and QRLDHLRLCRCRKLKSLPELPASLRL.

The catalysed reaction is NAD(+) + H2O = ADP-D-ribose + nicotinamide + H(+). Its function is as follows. TIR-NB-LRR receptor-like protein that confers resistance to the pathogen Leptosphaeria maculans (blackleg disease). This Arabidopsis thaliana (Mouse-ear cress) protein is Disease resistance protein RML1A.